A 304-amino-acid polypeptide reads, in one-letter code: UDP-N-acetylenolpyruvoylglucosamine reductase (304 aa).

An FAD-binding PCMH-type domain is found at 28–193; it reads KTGGPADYLA…LTATFALTPG (166 aa). Arg172 is an active-site residue. The Proton donor role is filled by Ser222. Residue Glu292 is part of the active site.

It belongs to the MurB family. FAD serves as cofactor.

It localises to the cytoplasm. The enzyme catalyses UDP-N-acetyl-alpha-D-muramate + NADP(+) = UDP-N-acetyl-3-O-(1-carboxyvinyl)-alpha-D-glucosamine + NADPH + H(+). Its pathway is cell wall biogenesis; peptidoglycan biosynthesis. Functionally, cell wall formation. This is UDP-N-acetylenolpyruvoylglucosamine reductase from Levilactobacillus brevis (strain ATCC 367 / BCRC 12310 / CIP 105137 / JCM 1170 / LMG 11437 / NCIMB 947 / NCTC 947) (Lactobacillus brevis).